Reading from the N-terminus, the 437-residue chain is Zinc finger protein 491 (437 aa).

The C2H2-type 1; degenerate zinc finger occupies 35–59 (KSCESGTCGEIFMGYSSFNRNIRTD). The segment at 103–125 (FDCKECEKSFISPASIRRYMVTH) adopts a C2H2-type 2; degenerate zinc-finger fold. C2H2-type zinc fingers lie at residues 131–153 (YKCK…ERTH), 159–181 (YECK…ERTH), 187–209 (YECK…ERTH), 215–237 (YKCK…ERTH), 243–265 (YECK…MRMH), 271–293 (HKCK…ERSH), 299–321 (YKCK…ERTH), 327–349 (DGCK…GRTH), 355–377 (YECK…ERTH), 383–405 (YECK…ERIH), and 411–433 (YQCK…ERTH).

Belongs to the krueppel C2H2-type zinc-finger protein family.

It is found in the nucleus. May be involved in transcriptional regulation. This is Zinc finger protein 491 (ZNF491) from Homo sapiens (Human).